Here is a 272-residue protein sequence, read N- to C-terminus: Phosphonates import ATP-binding protein PhnC (272 aa).

An ABC transporter domain is found at 2–246 (LELQRLTKTY…VLATIYGAED (245 aa)). 35–42 (GPSGAGKS) lines the ATP pocket. The disordered stretch occupies residues 248-272 (ASSGREPAPEREPEDTERHLAEVGR). The span at 254–272 (PAPEREPEDTERHLAEVGR) shows a compositional bias: basic and acidic residues.

The protein belongs to the ABC transporter superfamily. Phosphonates importer (TC 3.A.1.9.1) family. The complex is composed of two ATP-binding proteins (PhnC), two transmembrane proteins (PhnE) and a solute-binding protein (PhnD).

The protein localises to the cell inner membrane. The enzyme catalyses phosphonate(out) + ATP + H2O = phosphonate(in) + ADP + phosphate + H(+). Part of the ABC transporter complex PhnCDE involved in phosphonates import. Responsible for energy coupling to the transport system. The polypeptide is Phosphonates import ATP-binding protein PhnC (Chromohalobacter salexigens (strain ATCC BAA-138 / DSM 3043 / CIP 106854 / NCIMB 13768 / 1H11)).